The primary structure comprises 289 residues: Homeobox protein engrailed-2 (289 aa).

2 stretches are compositionally biased toward basic and acidic residues: residues 1-12 (MEEGGRSPREEA) and 60-83 (EFGR…ESRR). Disordered regions lie at residues 1–166 (MEEG…GNQP) and 179–206 (SDRP…PRTA). Residues 96-114 (VPGGGGGGGGGSPGRGEGG) show a composition bias toward gly residues. The segment covering 142–160 (LSGAELSVSSDSDSSQAGS) has biased composition (low complexity). The segment at residues 200–259 (DKRPRTAFTAEQLQRLKAEFQTNRYLTEQRRQSLAQELGLNESQIKIWFQNKRAKIKKAT) is a DNA-binding region (homeobox).

It belongs to the engrailed homeobox family.

The protein localises to the nucleus. This is Homeobox protein engrailed-2 (EN2) from Gallus gallus (Chicken).